The sequence spans 318 residues: Ribose-phosphate pyrophosphokinase 2 (318 aa).

Residues Asp-132, His-134, His-143, and Asp-147 each coordinate Mg(2+).

It belongs to the ribose-phosphate pyrophosphokinase family.

Its subcellular location is the cytoplasm. The enzyme catalyses D-ribose 5-phosphate + ATP = 5-phospho-alpha-D-ribose 1-diphosphate + AMP + H(+). Its pathway is metabolic intermediate biosynthesis; 5-phospho-alpha-D-ribose 1-diphosphate biosynthesis; 5-phospho-alpha-D-ribose 1-diphosphate from D-ribose 5-phosphate (route I): step 1/1. In terms of biological role, 5-phosphoribose 1-diphosphate synthase involved in nucleotide, histidine, and tryptophan biosynthesis. Active in heteromultimeric complexes with other 5-phosphoribose 1-diphosphate synthases (PRS2, PRS3, PRS4 and PRS5). In Saccharomyces cerevisiae (strain ATCC 204508 / S288c) (Baker's yeast), this protein is Ribose-phosphate pyrophosphokinase 2 (PRS2).